A 506-amino-acid chain; its full sequence is Probable UTP--glucose-1-phosphate uridylyltransferase (506 aa).

2 positions are modified to phosphoserine: S15 and S17. UTP is bound by residues 115–118 (LNGG), K129, Q192, and G221. Residue 117 to 118 (GG) coordinates substrate. Residue K129 participates in Mg(2+) binding. Substrate contacts are provided by residues H222 and 250-252 (NID). Positions 252 and 394 each coordinate UTP. D252 contacts Mg(2+). K394 is an active-site residue. Residues 455–506 (HLTITGDVNIGRNVTLKGTVIIVASDANRIDIPNGSVLENCVITGNLNILEH) are oligomerization.

The protein belongs to the UDPGP type 1 family. As to quaternary structure, homooctamer.

The protein localises to the cytoplasm. It is found in the nucleus. It carries out the reaction alpha-D-glucose 1-phosphate + UTP + H(+) = UDP-alpha-D-glucose + diphosphate. Its function is as follows. Plays a central role as a glucosyl donor in cellular metabolic pathways. The protein is Probable UTP--glucose-1-phosphate uridylyltransferase (fyu1) of Schizosaccharomyces pombe (strain 972 / ATCC 24843) (Fission yeast).